Consider the following 145-residue polypeptide: uncharacterized protein (145 aa).

The tract at residues 95 to 119 is disordered; the sequence is YVDSTSRTPSAKKDMQGLSVSEKQT.

This is an uncharacterized protein from Treponema pallidum (strain Nichols).